Reading from the N-terminus, the 244-residue chain is Tetraspanin-7 (244 aa).

Topologically, residues 1 to 11 (METKPVITCLK) are cytoplasmic. Residues 12–35 (TLLIIYSFVFWITGVILLAVGVWG) traverse the membrane as a helical segment. Residues 36-51 (KLTLGTYISLIAENST) lie on the Extracellular side of the membrane. The N-linked (GlcNAc...) asparagine glycan is linked to Asn-49. The chain crosses the membrane as a helical span at residues 52-70 (NAPYVLIGTGTTIVVFGLF). The Cytoplasmic portion of the chain corresponds to 71–81 (GCFATCRGSPW). Residues 82-107 (MLKLYAMFLSLVFLAELVAGISGFVF) traverse the membrane as a helical segment. Residues 108-208 (RHEIKDTFLR…LVTSFMETNM (101 aa)) are Extracellular-facing. Asn-150, Asn-153, Asn-172, and Asn-183 each carry an N-linked (GlcNAc...) asparagine glycan. Residues 209–229 (GIIAGVAFGIAFSQLIGMLLA) form a helical membrane-spanning segment. Residues 230 to 244 (CCLSRFITANQYEMV) are Cytoplasmic-facing.

Belongs to the tetraspanin (TM4SF) family.

The protein localises to the membrane. In terms of biological role, may be involved in cell proliferation and cell motility. The sequence is that of Tetraspanin-7 (TSPAN7) from Pongo pygmaeus (Bornean orangutan).